The chain runs to 463 residues: Argininosuccinate lyase (463 aa).

The protein belongs to the lyase 1 family. Argininosuccinate lyase subfamily.

The protein localises to the cytoplasm. The catalysed reaction is 2-(N(omega)-L-arginino)succinate = fumarate + L-arginine. It functions in the pathway amino-acid biosynthesis; L-arginine biosynthesis; L-arginine from L-ornithine and carbamoyl phosphate: step 3/3. The sequence is that of Argininosuccinate lyase from Dinoroseobacter shibae (strain DSM 16493 / NCIMB 14021 / DFL 12).